Here is a 455-residue protein sequence, read N- to C-terminus: Exodeoxyribonuclease 7 large subunit (455 aa).

The protein belongs to the XseA family. Heterooligomer composed of large and small subunits.

Its subcellular location is the cytoplasm. The catalysed reaction is Exonucleolytic cleavage in either 5'- to 3'- or 3'- to 5'-direction to yield nucleoside 5'-phosphates.. Its function is as follows. Bidirectionally degrades single-stranded DNA into large acid-insoluble oligonucleotides, which are then degraded further into small acid-soluble oligonucleotides. This chain is Exodeoxyribonuclease 7 large subunit, found in Escherichia coli O7:K1 (strain IAI39 / ExPEC).